The primary structure comprises 415 residues: Gamma-glutamyl phosphate reductase (415 aa).

The protein belongs to the gamma-glutamyl phosphate reductase family.

The protein resides in the cytoplasm. The catalysed reaction is L-glutamate 5-semialdehyde + phosphate + NADP(+) = L-glutamyl 5-phosphate + NADPH + H(+). The protein operates within amino-acid biosynthesis; L-proline biosynthesis; L-glutamate 5-semialdehyde from L-glutamate: step 2/2. Its function is as follows. Catalyzes the NADPH-dependent reduction of L-glutamate 5-phosphate into L-glutamate 5-semialdehyde and phosphate. The product spontaneously undergoes cyclization to form 1-pyrroline-5-carboxylate. The chain is Gamma-glutamyl phosphate reductase from Bacteroides fragilis (strain YCH46).